The primary structure comprises 295 residues: MSTEPKRKFGVVVVGVGRAGSVRIRDLKDPHSSAFLNLIGYVSRRELGSLDNVRQISLEDALRSQEVDVAYICTESSSHEDYIRQFLQAGKHVLVEYPMALSFAAAQELWELAAQKGRVLHEEHIELLMEEFEFLKREVAGKELLKGSLRFTASPLEEEKFGFPAFSGISRLTWLVSLFGELSLISATMENRKEDQYMKMTVQLETQNKSPLSWIEEKGPGLKRNRHISIHFKSGSLEEVPNVGVNKNIFLKDQDIFIQKLLGQVSAEDLAAEKKRILHCLELASDIQRLCHRKQ.

Residues 1–2 (MS) constitute a propeptide that is removed on maturation. NAD(+) contacts are provided by residues 18–19 (RA), 76–79 (SSSH), and Y97. S154 bears the Phosphoserine mark. S167 contributes to the NAD(+) binding site. T173 carries the post-translational modification Phosphothreonine. Phosphoserine is present on residues S177 and S229. K247 and K252 each carry N6-acetyllysine. Positions 279, 280, 291, and 292 each coordinate Zn(2+).

This sequence belongs to the Gfo/Idh/MocA family. Biliverdin reductase subfamily. As to quaternary structure, monomer. Zn(2+) is required as a cofactor.

It is found in the cytoplasm. Its subcellular location is the cytosol. The enzyme catalyses (4Z,15Z)-bilirubin IXalpha + NAD(+) = biliverdin IXalpha + NADH + H(+). It carries out the reaction (4Z,15Z)-bilirubin IXalpha + NADP(+) = biliverdin IXalpha + NADPH + H(+). It participates in porphyrin-containing compound metabolism; protoheme degradation. Its function is as follows. Reduces the gamma-methene bridge of the open tetrapyrrole, biliverdin IXalpha, to bilirubin with the concomitant oxidation of a NADH or NADPH cofactor. Does not reduce bilirubin IXbeta. Uses the reactants NADH or NADPH depending on the pH; NADH is used at the acidic pH range (6-6.9) and NADPH at the alkaline range (8.5-8.7). NADPH, however, is the probable reactant in biological systems. This is Biliverdin reductase A from Mus musculus (Mouse).